A 337-amino-acid chain; its full sequence is Ornithine carbamoyltransferase (337 aa).

Carbamoyl phosphate-binding positions include 57 to 60 (STRT), Gln84, Arg108, and 135 to 138 (HPTQ). Residues Asn167, Asp231, and 235–236 (SM) each bind L-ornithine. Residues 272–273 (CL) and Arg317 each bind carbamoyl phosphate.

It belongs to the aspartate/ornithine carbamoyltransferase superfamily. OTCase family.

The protein resides in the cytoplasm. It catalyses the reaction carbamoyl phosphate + L-ornithine = L-citrulline + phosphate + H(+). Its pathway is amino-acid degradation; L-arginine degradation via ADI pathway; carbamoyl phosphate from L-arginine: step 2/2. In terms of biological role, reversibly catalyzes the transfer of the carbamoyl group from carbamoyl phosphate (CP) to the N(epsilon) atom of ornithine (ORN) to produce L-citrulline. This is Ornithine carbamoyltransferase from Streptococcus equi subsp. equi (strain 4047).